Here is a 272-residue protein sequence, read N- to C-terminus: 4-hydroxy-tetrahydrodipicolinate reductase (272 aa).

NAD(+) contacts are provided by residues 11–16 (GAGGRM) and glutamate 37. Arginine 38 provides a ligand contact to NADP(+). Residues 101 to 103 (GTT) and 125 to 128 (AANF) each bind NAD(+). The Proton donor/acceptor role is filled by histidine 158. Residue histidine 159 coordinates (S)-2,3,4,5-tetrahydrodipicolinate. The Proton donor role is filled by lysine 162. (S)-2,3,4,5-tetrahydrodipicolinate is bound at residue 168 to 169 (GT).

It belongs to the DapB family. Homotetramer.

The protein localises to the cytoplasm. The enzyme catalyses (S)-2,3,4,5-tetrahydrodipicolinate + NAD(+) + H2O = (2S,4S)-4-hydroxy-2,3,4,5-tetrahydrodipicolinate + NADH + H(+). It carries out the reaction (S)-2,3,4,5-tetrahydrodipicolinate + NADP(+) + H2O = (2S,4S)-4-hydroxy-2,3,4,5-tetrahydrodipicolinate + NADPH + H(+). The protein operates within amino-acid biosynthesis; L-lysine biosynthesis via DAP pathway; (S)-tetrahydrodipicolinate from L-aspartate: step 4/4. Catalyzes the conversion of 4-hydroxy-tetrahydrodipicolinate (HTPA) to tetrahydrodipicolinate. This chain is 4-hydroxy-tetrahydrodipicolinate reductase, found in Edwardsiella ictaluri (strain 93-146).